Reading from the N-terminus, the 146-residue chain is Ribonuclease P protein component (146 aa).

Belongs to the RnpA family. Consists of a catalytic RNA component (M1 or rnpB) and a protein subunit.

It carries out the reaction Endonucleolytic cleavage of RNA, removing 5'-extranucleotides from tRNA precursor.. Functionally, RNaseP catalyzes the removal of the 5'-leader sequence from pre-tRNA to produce the mature 5'-terminus. It can also cleave other RNA substrates such as 4.5S RNA. The protein component plays an auxiliary but essential role in vivo by binding to the 5'-leader sequence and broadening the substrate specificity of the ribozyme. This is Ribonuclease P protein component from Helicobacter hepaticus (strain ATCC 51449 / 3B1).